The sequence spans 428 residues: Protein CANDIDATE G-PROTEIN COUPLED RECEPTOR 6 (428 aa).

A signal peptide spans 1-22 (MTILPFLAAVFVLQLLSTLTVA). N-linked (GlcNAc...) asparagine glycans are attached at residues Asn-31, Asn-89, and Asn-157. A run of 7 helical transmembrane segments spans residues 173-193 (LYLV…CFCW), 202-222 (IHLL…CAAV), 238-258 (IVFY…IVLI), 276-296 (LLVI…VIGE), 310-330 (IFFL…VWSM), 356-376 (FYVL…VMKM), and 385-405 (VSNA…FYMF).

This sequence belongs to the LU7TM family.

Its subcellular location is the membrane. Its function is as follows. G-protein coupled receptor. Plays a role in plants and microbes interactions. The polypeptide is Protein CANDIDATE G-PROTEIN COUPLED RECEPTOR 6 (Arabidopsis thaliana (Mouse-ear cress)).